Here is a 302-residue protein sequence, read N- to C-terminus: Putative S-adenosyl-L-methionine-dependent methyltransferase MRA_0290 (302 aa).

S-adenosyl-L-methionine is bound by residues D126 and 155 to 156; that span reads DL.

The protein belongs to the UPF0677 family.

Its function is as follows. Exhibits S-adenosyl-L-methionine-dependent methyltransferase activity. The sequence is that of Putative S-adenosyl-L-methionine-dependent methyltransferase MRA_0290 from Mycobacterium tuberculosis (strain ATCC 25177 / H37Ra).